Reading from the N-terminus, the 565-residue chain is Transmembrane 7 superfamily member 3 (565 aa).

A signal peptide spans 1 to 21; the sequence is MWRLRLLVLAVLAAGSAEAQA. 4 N-linked (GlcNAc...) asparagine glycosylation sites follow: asparagine 22, asparagine 56, asparagine 70, and asparagine 259. 7 consecutive transmembrane segments (helical) span residues 287 to 307, 315 to 335, 341 to 361, 364 to 384, 402 to 422, 427 to 447, and 478 to 498; these read VSTKVFSTLFALLGLFVCFFG, LFFVGFIFLGFFFYILITRLT, VRLALTAVAGSFGGLLLVASW, FGILTLCMLCVGLVLGFLVSS, VFWVTFSCIALLVPVIFMGCL, ILACGVVGSYSVVLAVNSYMF, and NDYIILAVWGMLAVSGITLQI.

Its subcellular location is the cell membrane. In terms of biological role, involved in the inhibition of cytokine-induced death of pancreatic beta cells. Involved in the promotion of insulin secretion from pancreatic beta cells. Is a downstream transcriptional target of p53/TP53, and acts as a pro-survival homeostatic factor that attenuates the development of cellular stress. Maintains protein homeostasis and promotes cell survival through attenuation of endoplasmic reticulum (ER) stress and the subsequent induction of unfolded protein response (UPR). In Mus musculus (Mouse), this protein is Transmembrane 7 superfamily member 3 (Tm7sf3).